The following is a 510-amino-acid chain: MEFTECKTTFIHLPDKSFLYDVFVSVYNFYHPIHAYLSIFLCVLGTIANFCNIVVLTRRTMRTPVNMILTAMASCDTVVLFSNLIYTTHYSFVAFKFCHPKHWSYSWALFLIAHAHLSLVAHSSSVWLSVMLALVRYVTLRSRGNMGGMQVTLRHSYYAVAVTVSLVAVLNAPNFLNYKINEQPLNETCTDLDPMFWNSPAYLPGIADIAKANSCLVFRLSYWISGMVFKVLPCALLSLFVWLLLRILREVRENRQRLLKNSQHRPPNQTTTRNGQRLSISVAGNEKLGRNGSLRGRGERVDRTTHMLLAIVAVMLVTELPQGIMAVLSGMCSEEFRIYIYNNLGDILDLFSLCGSCCSFIIYCSMSGQFRNEFHRVFVPAKVRCLRMSSPSIRRPSDAYSTTKMTFLKPNEKNGNGMNGNGTYSEDTRSASVKMVGIQVRRNSTEITRMTGCDSITPCSPMPTSFPSSPLPPIRSGEDESTDETSHLLNSSGPNSTASADGIRGHFQNI.

Residues 1–35 (MEFTECKTTFIHLPDKSFLYDVFVSVYNFYHPIHA) lie on the Extracellular side of the membrane. Residues 36-56 (YLSIFLCVLGTIANFCNIVVL) form a helical membrane-spanning segment. Topologically, residues 57–64 (TRRTMRTP) are cytoplasmic. Residues 65-85 (VNMILTAMASCDTVVLFSNLI) traverse the membrane as a helical segment. The Extracellular portion of the chain corresponds to 86–107 (YTTHYSFVAFKFCHPKHWSYSW). Residues 108–128 (ALFLIAHAHLSLVAHSSSVWL) form a helical membrane-spanning segment. The Cytoplasmic segment spans residues 129-155 (SVMLALVRYVTLRSRGNMGGMQVTLRH). The chain crosses the membrane as a helical span at residues 156-176 (SYYAVAVTVSLVAVLNAPNFL). The Extracellular segment spans residues 177 to 223 (NYKINEQPLNETCTDLDPMFWNSPAYLPGIADIAKANSCLVFRLSYW). N-linked (GlcNAc...) asparagine glycosylation occurs at Asn186. Residues 224–244 (ISGMVFKVLPCALLSLFVWLL) traverse the membrane as a helical segment. The Cytoplasmic portion of the chain corresponds to 245 to 307 (LRILREVREN…GERVDRTTHM (63 aa)). The chain crosses the membrane as a helical span at residues 308 to 328 (LLAIVAVMLVTELPQGIMAVL). The Extracellular segment spans residues 329-343 (SGMCSEEFRIYIYNN). Residues 344-364 (LGDILDLFSLCGSCCSFIIYC) form a helical membrane-spanning segment. Topologically, residues 365–510 (SMSGQFRNEF…DGIRGHFQNI (146 aa)) are cytoplasmic. The interval 452 to 510 (GCDSITPCSPMPTSFPSSPLPPIRSGEDESTDETSHLLNSSGPNSTASADGIRGHFQNI) is disordered. Polar residues predominate over residues 487–499 (HLLNSSGPNSTAS).

This sequence belongs to the G-protein coupled receptor 1 family. As to expression, expressed in head neurons including the RID neuron and the paired AIY neurons, and in tail neurons including the paired PHA and PHB neurons. Not expressed in AVE and AVA neurons.

It is found in the cell membrane. Its function is as follows. G-protein coupled receptor. Functionally, G-protein coupled receptor for flp-13 RFamide neuropeptides in vitro. Upon activation by flp-13 RFamide neuropeptides, promotes sleep in response to cellular stress also known as stress-induced sleep (SIS), probably by inhibiting the activity of wake-promoting neurons. In Caenorhabditis elegans, this protein is G-protein coupled receptor dmsr-1.